Consider the following 2499-residue polypeptide: Probable polyketide synthase 23 (2499 aa).

The Ketosynthase family 3 (KS3) domain occupies 11 to 430 (DNQVAIVGLG…GSNACVLLSE (420 aa)). Residues C177, H316, and H354 each act as for beta-ketoacyl synthase activity in the active site. An acyl/malonyl transferases region spans residues 623-656 (GITPSIIVGHSLGEVASAFCSGMIDLETACFVIY). Residue S633 is the For acyl/malonyl transferase activity of the active site. Positions 924–1044 (INQLGNKNEL…SRILMKSLDV (121 aa)) are N-terminal hotdog fold. Residues 924 to 1209 (INQLGNKNEL…IASTLSTNID (286 aa)) enclose the PKS/mFAS DH domain. H956 acts as the Proton acceptor; for dehydratase activity in catalysis. The segment at 1059–1209 (NWSTLKREQL…IASTLSTNID (151 aa)) is C-terminal hotdog fold. D1121 (proton donor; for dehydratase activity) is an active-site residue. Residues 2414–2491 (EKEFSIRQDI…QIINIVTTKV (78 aa)) enclose the Carrier domain. An O-(pantetheine 4'-phosphoryl)serine modification is found at S2451.

The cofactor is pantetheine 4'-phosphate.

Its function is as follows. Probable polyketide synthase. This chain is Probable polyketide synthase 23 (pks23), found in Dictyostelium discoideum (Social amoeba).